The chain runs to 265 residues: Protein IL-40 (265 aa).

Positions 1–20 (MGLPGLFCLAVLAASSFSKA) are cleaved as a signal peptide. Asn-86 and Asn-132 each carry an N-linked (GlcNAc...) asparagine glycan.

Expressed in fetal liver and bone marrow. Expressed in peripheral blood lymphocyte B cells.

The protein resides in the secreted. Probable B cell-associated cytokine that plays a role in the regulation of humoral immune responses. Involved in lymphocyte B cell development and immunoglobulin/IgA production. The protein is Protein IL-40 of Homo sapiens (Human).